The primary structure comprises 82 residues: Diphthamide biosynthesis protein 3 (82 aa).

One can recognise a DPH-type MB domain in the interval 4–60 (FHDEVEIEDFQYDEDSETYFYPCPCGDNFSITKEDLENGEDVATCPSCSLIIKVIYD). C26, C28, C48, and C51 together coordinate Fe cation.

Belongs to the DPH3 family. Component of the 2-(3-amino-3-carboxypropyl)histidine synthase complex composed of DPH1, DPH2, DPH3 and a NADH-dependent reductase. Interacts with SERGEF. Fe(2+) serves as cofactor.

The protein resides in the cytoplasm. Its subcellular location is the nucleus. The catalysed reaction is [3Fe-4S](1+)-[protein] + Fe(2+)-[Dph3] = [3Fe-4S](0)-[protein] + Fe(3+)-[Dph3]. It carries out the reaction 2 [3Fe-4S](0)-[protein] + 2 Fe(2+)-[Dph3] + NADH = 2 [4Fe-4S](1+)-[protein] + 2 [Dph3] + NAD(+) + H(+). The protein operates within protein modification; peptidyl-diphthamide biosynthesis. In terms of biological role, required for the first step of diphthamide biosynthesis, a post-translational modification of histidine which occurs in elongation factor 2. DPH1 and DPH2 transfer a 3-amino-3-carboxypropyl (ACP) group from S-adenosyl-L-methionine (SAM) to a histidine residue, the reaction is assisted by a reduction system comprising DPH3 and a NADH-dependent reductase. Acts as an electron donor to reduce the Fe-S cluster in DPH1-DPH2 keeping the [4Fe-4S] clusters in the active and reduced state. Restores iron to DPH1-DPH2 iron-sulfur clusters which have degraded from [4Fe-4S] to [3Fe-4S] by donating an iron atom to reform [4Fe-4S] clusters, in a manner dependent on the presence of elongation factor 2 and SAM. Associates with the elongator complex and is required for tRNA Wobble base modifications mediated by the elongator complex. The elongator complex is required for multiple tRNA modifications, including mcm5U (5-methoxycarbonylmethyl uridine), mcm5s 2U (5-methoxycarbonylmethyl-2-thiouridine), and ncm5U (5-carbamoylmethyl uridine). The chain is Diphthamide biosynthesis protein 3 (DPH3) from Cricetulus griseus (Chinese hamster).